Here is a 340-residue protein sequence, read N- to C-terminus: Probable cyclic nucleotide phosphodiesterase PsycPRwf_0181 (340 aa).

The segment at 1 to 36 (MAPLPHSVSPRHTQVADNGRLSEPTDYHPPTEISTD) is disordered. 7 residues coordinate Fe cation: Asp47, His49, Asp128, Asn158, His237, His276, and His278. AMP contacts are provided by residues His49, Asp128, and 158-159 (NH). Residue His278 participates in AMP binding.

This sequence belongs to the cyclic nucleotide phosphodiesterase class-III family. Fe(2+) is required as a cofactor.

This chain is Probable cyclic nucleotide phosphodiesterase PsycPRwf_0181, found in Psychrobacter sp. (strain PRwf-1).